The sequence spans 101 residues: Small ribosomal subunit protein uS14 (101 aa).

The protein belongs to the universal ribosomal protein uS14 family. Part of the 30S ribosomal subunit. Contacts proteins S3 and S10.

Functionally, binds 16S rRNA, required for the assembly of 30S particles and may also be responsible for determining the conformation of the 16S rRNA at the A site. The polypeptide is Small ribosomal subunit protein uS14 (Shewanella sp. (strain MR-4)).